The following is a 265-amino-acid chain: Small ribosomal subunit protein uS2 (265 aa).

Residues 231 to 265 (VEEEYEDYEGSEEDYDYDETEYADSVIPEDGEEAE) form a disordered region.

This sequence belongs to the universal ribosomal protein uS2 family.

This chain is Small ribosomal subunit protein uS2, found in Nostoc sp. (strain PCC 7120 / SAG 25.82 / UTEX 2576).